We begin with the raw amino-acid sequence, 358 residues long: Protein IncC (358 aa).

The tract at residues 1–101 is disordered; sequence MGAIHEETAN…VGSRRQEETG (101 aa). The span at 88-99 shows a compositional bias: basic and acidic residues; that stretch reads HRQEVGSRRQEE.

The protein belongs to the ParA family.

In terms of biological role, this is one of the proteins encoded by the trfB operon; it is involved in plasmid maintenance and replication. In Escherichia coli, this protein is Protein IncC (incC).